Reading from the N-terminus, the 750-residue chain is Xylosyl- and glucuronyltransferase LARGE2s (750 aa).

At 1–10 the chain is on the cytoplasmic side; that stretch reads MLCPCRGKLK. Residues 11–31 traverse the membrane as a helical; Signal-anchor for type II membrane protein segment; that stretch reads LLVVSLSFVILFTWLYLLVGN. Residues 32–750 are Lumenal-facing; that stretch reads SENGRSLLLS…LKYLTAQRNI (719 aa). Asn-116, Asn-142, and Asn-228 each carry an N-linked (GlcNAc...) asparagine glycan. Positions 132–407 are xylosyltransferase activity; sequence LHVACVCAGH…FLEYDGNLLR (276 aa). Residues Asp-236 and Asp-238 each coordinate Mn(2+). N-linked (GlcNAc...) asparagine glycosylation is present at Asn-266. The interval 408-750 is glucuronyltransferase activity; sequence RELFGCPSQA…LKYLTAQRNI (343 aa). Mn(2+) is bound by residues Asp-557 and Asp-559.

In the C-terminal section; belongs to the glycosyltransferase 49 family. This sequence in the N-terminal section; belongs to the glycosyltransferase 8 family. Requires Mn(2+) as cofactor.

It localises to the golgi apparatus membrane. It catalyses the reaction 3-O-[beta-D-GlcA-(1-&gt;3)-beta-D-Xyl-(1-&gt;4)-Rib-ol-P-Rib-ol-P-3-beta-D-GalNAc-(1-&gt;3)-beta-D-GlcNAc-(1-&gt;4)-(O-6-P-alpha-D-Man)]-Thr-[protein] + UDP-alpha-D-xylose = 3-O-[alpha-D-Xyl-(1-&gt;3)-beta-D-GlcA-(1-&gt;4)-beta-D-Xyl-(1-&gt;4)-Rib-ol-P-Rib-ol-P-3-beta-D-GalNAc-(1-&gt;3)-beta-D-GlcNAc-(1-&gt;4)-(O-6-P-alpha-D-Man)]-Thr-[protein] + UDP + H(+). The enzyme catalyses 3-O-{(1-&gt;[3)-alpha-D-Xyl-(1-&gt;3)-beta-D-GlcA-(1-&gt;](n)-4)-beta-D-Xyl-(1-&gt;4)-Rib-ol-P-Rib-ol-P-3-beta-D-GalNAc-(1-&gt;3)-beta-D-GlcNAc-(1-&gt;4)-O-6-P-alpha-D-Man}-L-Thr-[protein] + UDP-alpha-D-glucuronate = 3-O-{beta-D-GlcA-(1-&gt;[3)-alpha-D-Xyl-(1-&gt;3)-beta-D-GlcA-(1-&gt;](n)-4)-beta-D-Xyl-(1-&gt;4)-Rib-ol-P-Rib-ol-P-3-beta-D-GalNAc-(1-&gt;3)-beta-D-GlcNAc-(1-&gt;4)-O-6-P-alpha-D-Man}-L-Thr-[protein] + UDP + H(+). The catalysed reaction is 3-O-{beta-D-GlcA-(1-&gt;[3)-alpha-D-Xyl-(1-&gt;3)-beta-D-GlcA-(1-&gt;](n)-4)-beta-D-Xyl-(1-&gt;4)-Rib-ol-P-Rib-ol-P-3-beta-D-GalNAc-(1-&gt;3)-beta-D-GlcNAc-(1-&gt;4)-O-6-P-alpha-D-Man}-L-Thr-[protein] + UDP-alpha-D-xylose = 3-O-{(1-&gt;[3)-alpha-D-Xyl-(1-&gt;3)-beta-D-GlcA-(1-&gt;](n+1)-4)-beta-D-Xyl-(1-&gt;4)-Rib-ol-P-Rib-ol-P-3-beta-D-GalNAc-(1-&gt;3)-beta-D-GlcNAc-(1-&gt;4)-O-6-P-alpha-D-Man}-L-Thr-[protein] + UDP + H(+). The protein operates within protein modification; protein glycosylation. In terms of biological role, bifunctional glycosyltransferase with both alpha-1,3-xylosyltransferase and beta-1,3-glucuronyltransferase activities involved in the maturation of alpha-dystroglycan (DAG1) by glycosylation leading to DAG1 binding to laminin G-like domain-containing extracellular proteins with high affinity and in a phosphorylated-O-mannosyl trisaccharide dependent manner. Elongates the glucuronyl-beta-1,4-xylose-beta disaccharide primer structure by adding repeating units [-3-Xylose-alpha-1,3-GlcA-beta-1-] to produce a heteropolysaccharide. Supports the maturation of DAG1 more effectively than LARGE1. In addition, can modify both heparan sulfate (HS)- and chondroitin/dermatan sulfate (CS/DS)-proteoglycans (PGs), namely GPC4, with a glycosaminoglycan (GAG)-like polysaccharide composed of xylose and glucuronic acid to confer laminin binding. The chain is Xylosyl- and glucuronyltransferase LARGE2s from Danio rerio (Zebrafish).